A 506-amino-acid polypeptide reads, in one-letter code: Probable Xaa-Pro aminopeptidase BDBG_08406 (506 aa).

Residues aspartate 285, aspartate 296, glutamate 433, and glutamate 471 each coordinate Mn(2+).

This sequence belongs to the peptidase M24B family. Mn(2+) is required as a cofactor.

It carries out the reaction Release of any N-terminal amino acid, including proline, that is linked to proline, even from a dipeptide or tripeptide.. In terms of biological role, catalyzes the removal of a penultimate prolyl residue from the N-termini of peptides. The chain is Probable Xaa-Pro aminopeptidase BDBG_08406 from Blastomyces gilchristii (strain SLH14081) (Blastomyces dermatitidis).